Here is a 99-residue protein sequence, read N- to C-terminus: NADH-quinone oxidoreductase subunit K (99 aa).

A run of 3 helical transmembrane segments spans residues 2 to 22, 28 to 48, and 60 to 80; these read PVEYYLWLAAILFGIGLLGVL, LILMMSVELMLNAANLTFLAF, and IAFFVIAVAAAEAAVGLAVVI.

The protein belongs to the complex I subunit 4L family. As to quaternary structure, NDH-1 is composed of 14 different subunits. Subunits NuoA, H, J, K, L, M, N constitute the membrane sector of the complex.

It is found in the cell inner membrane. It carries out the reaction a quinone + NADH + 5 H(+)(in) = a quinol + NAD(+) + 4 H(+)(out). In terms of biological role, NDH-1 shuttles electrons from NADH, via FMN and iron-sulfur (Fe-S) centers, to quinones in the respiratory chain. The immediate electron acceptor for the enzyme in this species is believed to be ubiquinone. Couples the redox reaction to proton translocation (for every two electrons transferred, four hydrogen ions are translocated across the cytoplasmic membrane), and thus conserves the redox energy in a proton gradient. In Anaeromyxobacter dehalogenans (strain 2CP-1 / ATCC BAA-258), this protein is NADH-quinone oxidoreductase subunit K.